Reading from the N-terminus, the 346-residue chain is MILEQYGITSFFKEQKIAATSSYGRVTAVFRDYYRVITENEEFLASLKRGNFYELSSTSLPTVGDFVEISGDLQILSVLERKTVFSRMNKDSAEQLIAANFDYALIVMSLNHDFNLNRLERYLTVAWDSGATPIIILTKADLVEDLSFYAQQLEAVAYGVPAYYVDNLSHHGFEALESDLKPNSTLILLGSSGVGKSSFINSLAGTDLMKTAGIREDDSKGKHTTTHREMHLLSNGWIVIDTPGMREFGVGFNQAGLETTFSDVEELAEGCRFHDCSHTQEPNCAVQAALEDGTLTMQHYENWLKLQREMAYHARKNSPALARQERDRWKVIQKSMRTHFKTRPKK.

One can recognise a CP-type G domain in the interval 93–248 (AEQLIAANFD…VIDTPGMREF (156 aa)). Residues 138-141 (TKAD) and 190-198 (GSSGVGKSS) each bind GTP. Residues Cys271, Cys276, His278, and Cys284 each coordinate Zn(2+).

This sequence belongs to the TRAFAC class YlqF/YawG GTPase family. RsgA subfamily. Monomer. Associates with 30S ribosomal subunit, binds 16S rRNA. It depends on Zn(2+) as a cofactor.

Its subcellular location is the cytoplasm. In terms of biological role, one of several proteins that assist in the late maturation steps of the functional core of the 30S ribosomal subunit. Helps release RbfA from mature subunits. May play a role in the assembly of ribosomal proteins into the subunit. Circularly permuted GTPase that catalyzes slow GTP hydrolysis, GTPase activity is stimulated by the 30S ribosomal subunit. The chain is Small ribosomal subunit biogenesis GTPase RsgA 1 from Listeria monocytogenes serovar 1/2a (strain ATCC BAA-679 / EGD-e).